The chain runs to 202 residues: Imidazole glycerol phosphate synthase subunit HisH (202 aa).

The region spanning 3-202 is the Glutamine amidotransferase type-1 domain; sequence RIVIIDYGLG…KILRNFVEMC (200 aa). Cys79 functions as the Nucleophile in the catalytic mechanism. Residues His183 and Glu185 contribute to the active site.

In terms of assembly, heterodimer of HisH and HisF.

Its subcellular location is the cytoplasm. It carries out the reaction 5-[(5-phospho-1-deoxy-D-ribulos-1-ylimino)methylamino]-1-(5-phospho-beta-D-ribosyl)imidazole-4-carboxamide + L-glutamine = D-erythro-1-(imidazol-4-yl)glycerol 3-phosphate + 5-amino-1-(5-phospho-beta-D-ribosyl)imidazole-4-carboxamide + L-glutamate + H(+). The enzyme catalyses L-glutamine + H2O = L-glutamate + NH4(+). Its pathway is amino-acid biosynthesis; L-histidine biosynthesis; L-histidine from 5-phospho-alpha-D-ribose 1-diphosphate: step 5/9. IGPS catalyzes the conversion of PRFAR and glutamine to IGP, AICAR and glutamate. The HisH subunit catalyzes the hydrolysis of glutamine to glutamate and ammonia as part of the synthesis of IGP and AICAR. The resulting ammonia molecule is channeled to the active site of HisF. In Methanosarcina mazei (strain ATCC BAA-159 / DSM 3647 / Goe1 / Go1 / JCM 11833 / OCM 88) (Methanosarcina frisia), this protein is Imidazole glycerol phosphate synthase subunit HisH.